The chain runs to 928 residues: Sodium/calcium exchanger 3 (928 aa).

A signal peptide spans 1–30 (MAWLRLQPLTSAFLHFGLVTFVLFLNCLRA). The Extracellular segment spans residues 31-73 (EAGDSGDVPSAGQNNESCSGSSDCKEGVILPIWYPENPSLGDK). A glycan (N-linked (GlcNAc...) asparagine) is linked at Asn-45. Residues 74 to 94 (IARVIVYFVALIYMFLGVSII) form a helical membrane-spanning segment. Residues 95-147 (ADRFMASIEVITSQEREVTIKKPNGETSTTTIRVWNETVSNLTLMALGSSAPE) are Cytoplasmic-facing. A helical transmembrane segment spans residues 148-168 (ILLSLIEVCGHGFIAGDLGPS). Residue Thr-169 is a topological domain, extracellular. A helical transmembrane segment spans residues 170 to 190 (IVGSAAFNMFIIIGICVYVIP). The Cytoplasmic portion of the chain corresponds to 191–201 (DGETRKIKHLR). Residues 202 to 222 (VFFVTAAWSIFAYIWLYMILA) traverse the membrane as a helical segment. Over 223–230 (VFSPGVVQ) the chain is Extracellular. The helical transmembrane segment at 231–251 (VWEGLLTLFFFPVCVLLAWVA) threads the bilayer. Residues 252-727 (DKRLLFYKYM…DESGEERLPS (476 aa)) lie on the Cytoplasmic side of the membrane. The tract at residues 253–272 (KRLLFYKYMHKKYRTDKHRG) is putative calmodulin-binding region. Calx-beta domains follow at residues 390 to 485 (EPED…VRLS) and 519 to 618 (ATVT…VIEM). Residues Glu-409, Asp-445, Asp-470, Asp-471, Ile-473, Glu-475, Glu-478, Asp-525, Asp-526, Asp-527, Glu-543, Asp-579, Asp-605, and Glu-673 each coordinate Ca(2+). A helical membrane pass occupies residues 728 to 748 (CFDYVMHFLTVFWKVLFACVP). The Extracellular portion of the chain corresponds to 749 to 755 (PTEYCHG). A helical transmembrane segment spans residues 756–776 (WACFVVSILIIGMLTAIIGDL). The Cytoplasmic segment spans residues 777–779 (ASH). The helical transmembrane segment at 780–800 (FGCTIGLKDSVTAVVFVAFGT) threads the bilayer. Residues 801 to 829 (SVPDTFASKAAALQDVYADASIGNVTGSN) lie on the Extracellular side of the membrane. An N-linked (GlcNAc...) asparagine glycan is attached at Asn-824. Residues 830 to 850 (AVNVFLGIGLAWSVAAIYWAM) traverse the membrane as a helical segment. Over 851 to 861 (QGQEFHVSAGT) the chain is Cytoplasmic. Residues 862-882 (LAFSVTLFTIFAFVCLSVLLY) traverse the membrane as a helical segment. At 883–904 (RRRPHLGGELGGPRGCKLATTW) the chain is on the extracellular side. The chain crosses the membrane as a helical span at residues 905–925 (LFVSLWLLYILFATLEAYCYI). At 926–928 (KGF) the chain is on the cytoplasmic side.

This sequence belongs to the Ca(2+):cation antiporter (CaCA) (TC 2.A.19) family. SLC8 subfamily. In terms of assembly, interacts with AKAP1. Detected in gray and white matter in the spinal cord. Detected in hippocampus neurons. Detected in brain cortex neurons. Detected in skeletal muscle (at protein level). Isoform 1 and isoform 2 are highly expressed in brain; levels are higher for isoform 2. Isoform 1 and isoform 2 are detected in soleus muscle; levels are higher for isoform 1. Detected in gastrocnemius muscle.

Its subcellular location is the cell membrane. It localises to the perikaryon. The protein localises to the cell projection. It is found in the dendrite. The protein resides in the dendritic spine. Its subcellular location is the sarcolemma. It localises to the cytoplasm. The protein localises to the sarcoplasm. It is found in the cell junction. The protein resides in the mitochondrion outer membrane. Its subcellular location is the perinuclear region. It localises to the endoplasmic reticulum membrane. It carries out the reaction Ca(2+)(in) + 3 Na(+)(out) = Ca(2+)(out) + 3 Na(+)(in). Calcium transport is stimulated by cytoplasmic Ca(2+) and is inhibited by Na(+). Isoform 1 is more sensitive to stimulation by Ca(2+) than isoform 2. Isoform 2 is more sensitive to inactivation by Na(+). In terms of biological role, mediates the electrogenic exchange of Ca(2+) against Na(+) ions across the cell membrane, and thereby contributes to the regulation of cytoplasmic Ca(2+) levels and Ca(2+)-dependent cellular processes. Contributes to cellular Ca(2+) homeostasis in excitable cells, both in muscle and in brain. In a first phase, voltage-gated channels mediate the rapid increase of cytoplasmic Ca(2+) levels due to release of Ca(2+) stores from the endoplasmic reticulum. SLC8A3 mediates the export of Ca(2+) from the cell during the next phase, so that cytoplasmic Ca(2+) levels rapidly return to baseline. Contributes to Ca(2+) transport during excitation-contraction coupling in muscle. In neurons, contributes to the rapid decrease of cytoplasmic Ca(2+) levels back to baseline after neuronal activation, and thereby contributes to modulate synaptic plasticity, learning and memory. Required for normal oligodendrocyte differentiation and for normal myelination. Mediates Ca(2+) efflux from mitochondria and contributes to mitochondrial Ca(2+) ion homeostasis. Isoform 1 displays higher calcium exchanger activity than isoform 2, probably because isoform 1 has a lower threshold for activation by cytoplasmic Ca(2+). The polypeptide is Sodium/calcium exchanger 3 (Mus musculus (Mouse)).